Consider the following 285-residue polypeptide: 2-dehydro-3-deoxyphosphooctonate aldolase (285 aa).

This sequence belongs to the KdsA family.

The protein localises to the cytoplasm. The catalysed reaction is D-arabinose 5-phosphate + phosphoenolpyruvate + H2O = 3-deoxy-alpha-D-manno-2-octulosonate-8-phosphate + phosphate. Its pathway is carbohydrate biosynthesis; 3-deoxy-D-manno-octulosonate biosynthesis; 3-deoxy-D-manno-octulosonate from D-ribulose 5-phosphate: step 2/3. It participates in bacterial outer membrane biogenesis; lipopolysaccharide biosynthesis. This chain is 2-dehydro-3-deoxyphosphooctonate aldolase, found in Polaromonas naphthalenivorans (strain CJ2).